A 577-amino-acid chain; its full sequence is Aspartate--tRNA(Asp) ligase (577 aa).

Glutamate 172 contacts L-aspartate. The tract at residues 196-199 is aspartate; sequence QLFK. Arginine 218 serves as a coordination point for L-aspartate. ATP is bound by residues 218–220 and glutamine 227; that span reads RDE. Histidine 438 contributes to the L-aspartate binding site. Residue glutamate 473 coordinates ATP. Arginine 480 is an L-aspartate binding site. 525-528 lines the ATP pocket; the sequence is GFDR.

Belongs to the class-II aminoacyl-tRNA synthetase family. Type 1 subfamily. As to quaternary structure, homodimer.

The protein resides in the cytoplasm. The catalysed reaction is tRNA(Asp) + L-aspartate + ATP = L-aspartyl-tRNA(Asp) + AMP + diphosphate. In terms of biological role, catalyzes the attachment of L-aspartate to tRNA(Asp) in a two-step reaction: L-aspartate is first activated by ATP to form Asp-AMP and then transferred to the acceptor end of tRNA(Asp). Is specific for tRNA(Asp) since it cannot aspartylate tRNA(Asn). The chain is Aspartate--tRNA(Asp) ligase (aspS1) from Deinococcus radiodurans (strain ATCC 13939 / DSM 20539 / JCM 16871 / CCUG 27074 / LMG 4051 / NBRC 15346 / NCIMB 9279 / VKM B-1422 / R1).